Here is a 766-residue protein sequence, read N- to C-terminus: Protein transport protein Sec23B (766 aa).

Ala2 carries the N-acetylalanine modification. Zn(2+) contacts are provided by Cys61, Cys66, Cys85, and Cys88. Residue Lys564 is modified to N6-acetyllysine. One copy of the Gelsolin-like repeat lies at 633-719; sequence PEPVLLDSSS…EHGGSQARFL (87 aa).

Belongs to the SEC23/SEC24 family. SEC23 subfamily. In terms of assembly, COPII is composed of at least five proteins: the Sec23/24 complex, the Sec13/31 complex and Sar1. Interacts with SAR1A.

It is found in the cytoplasmic vesicle. Its subcellular location is the COPII-coated vesicle membrane. It localises to the endoplasmic reticulum membrane. The protein localises to the cytoplasm. The protein resides in the cytosol. Component of the coat protein complex II (COPII) which promotes the formation of transport vesicles from the endoplasmic reticulum (ER). The coat has two main functions, the physical deformation of the endoplasmic reticulum membrane into vesicles and the selection of cargo molecules for their transport to the Golgi complex. The chain is Protein transport protein Sec23B from Pongo abelii (Sumatran orangutan).